A 235-amino-acid polypeptide reads, in one-letter code: Phosphoribosylaminoimidazole-succinocarboxamide synthase (235 aa).

It belongs to the SAICAR synthetase family.

It catalyses the reaction 5-amino-1-(5-phospho-D-ribosyl)imidazole-4-carboxylate + L-aspartate + ATP = (2S)-2-[5-amino-1-(5-phospho-beta-D-ribosyl)imidazole-4-carboxamido]succinate + ADP + phosphate + 2 H(+). Its pathway is purine metabolism; IMP biosynthesis via de novo pathway; 5-amino-1-(5-phospho-D-ribosyl)imidazole-4-carboxamide from 5-amino-1-(5-phospho-D-ribosyl)imidazole-4-carboxylate: step 1/2. This Streptococcus agalactiae serotype Ia (strain ATCC 27591 / A909 / CDC SS700) protein is Phosphoribosylaminoimidazole-succinocarboxamide synthase.